A 361-amino-acid chain; its full sequence is DNA replication and repair protein RecF (361 aa).

Position 30-37 (30-37 (GANGSGKT)) interacts with ATP.

Belongs to the RecF family.

It localises to the cytoplasm. In terms of biological role, the RecF protein is involved in DNA metabolism; it is required for DNA replication and normal SOS inducibility. RecF binds preferentially to single-stranded, linear DNA. It also seems to bind ATP. This Pectobacterium atrosepticum (strain SCRI 1043 / ATCC BAA-672) (Erwinia carotovora subsp. atroseptica) protein is DNA replication and repair protein RecF.